The primary structure comprises 273 residues: Cytosolic sulfotransferase 4 (273 aa).

74–79 (KCGTTW) is a 3'-phosphoadenylyl sulfate binding site. The active-site Proton acceptor is His121. 3'-phosphoadenylyl sulfate is bound by residues Arg143 and 239–241 (RKG).

This sequence belongs to the sulfotransferase 1 family.

Its subcellular location is the cytoplasm. Its function is as follows. Sulfotransferase that utilizes 3'-phospho-5'-adenylyl sulfate (PAPS) as sulfonate donor. This is Cytosolic sulfotransferase 4 (SOT4) from Arabidopsis thaliana (Mouse-ear cress).